The sequence spans 491 residues: Sodium-dependent glucose transporter 1 (491 aa).

A run of 11 helical transmembrane segments spans residues 26–46 (FIFV…GILF), 52–72 (HLLL…VPWC), 81–101 (VMSV…IIIL), 119–139 (FALG…FLPL), 165–185 (LSYI…FILF), 210–230 (AVIF…VAYG), 255–275 (LFWG…TCLY), 277–297 (GTML…LVLF), 303–323 (LLWV…PSGF), 338–358 (SLFV…VGYL), and 365–385 (FPVL…LFPV). Disordered stretches follow at residues 397–425 (AQYN…DEAQ) and 438–491 (NDQM…EKND). Positions 416-425 (MEEEDEDEAQ) are enriched in acidic residues. Residues 440–458 (QMKNSVTVISEDTPGNSAP) are compositionally biased toward polar residues.

The protein belongs to the major facilitator superfamily.

Its subcellular location is the apical cell membrane. Functionally, may function as a sodium-dependent glucose transporter. Potential channels for urea in the inner medulla of kidney. This Xenopus laevis (African clawed frog) protein is Sodium-dependent glucose transporter 1 (mfsd4b).